The following is a 540-amino-acid chain: Probable G-protein coupled receptor 75 (540 aa).

Residues 1 to 15 are compositionally biased toward polar residues; it reads MNSTGHLQDAPNATS. Positions 1-27 are disordered; the sequence is MNSTGHLQDAPNATSLHVPHSQEGNST. The Extracellular segment spans residues 1-46; the sequence is MNSTGHLQDAPNATSLHVPHSQEGNSTSLQEGLQDLIHTATLVTCT. 3 N-linked (GlcNAc...) asparagine glycosylation sites follow: Asn2, Asn12, and Asn25. A helical transmembrane segment spans residues 47-67; the sequence is FLLAVIFCLGSYGNFIVFLSF. Over 68 to 86 the chain is Cytoplasmic; that stretch reads FDPAFRKFRTNFDFMILNL. Residues 87 to 107 traverse the membrane as a helical segment; sequence SFCDLFICGVTAPMFTFVLFF. Residues 108–120 are Extracellular-facing; sequence SSASSIPDAFCFT. A helical membrane pass occupies residues 121-141; the sequence is FHLTSSGFIIMSLKTVAVIAL. Topologically, residues 142–160 are cytoplasmic; the sequence is HRLRMVLGKQPNRTASFPC. Residues 161–181 traverse the membrane as a helical segment; it reads TVLLTLLLWATSFTLATLATL. The Extracellular portion of the chain corresponds to 182-205; it reads KTSKSHLCLPMSSLIAGKGKAILS. Residues 206-226 form a helical membrane-spanning segment; that stretch reads LYVVDFTFCVAVVSVSYIMIA. The Cytoplasmic portion of the chain corresponds to 227–318; sequence QTLRKNAQVR…INLSTAKDSK (92 aa). The helical transmembrane segment at 319–339 threads the bilayer; it reads AVVTCVIIVLSVLVCCLPLGI. At 340–350 the chain is on the extracellular side; it reads SLVQVVLSSNG. A helical membrane pass occupies residues 351-371; that stretch reads SFILYQFELFGFTLIFFKSGL. Topologically, residues 372-540 are cytoplasmic; that stretch reads NPFIYSRNSA…SAKQIPVPSV (169 aa).

It belongs to the G-protein coupled receptor 1 family. Expressed at high levels in brain and spinal cord and at detectable levels in retinal pigment epithelium. In situ hybridization of adult eye sections localized transcripts only to the perivascular cells, surrounding retinal arterioles, in the ganglion cell/nerve fiber layer. Also expressed by islet cells (at protein level).

It is found in the cell membrane. Functionally, g protein-coupled receptor that is activated by the chemokine CCL5/RANTES. Probably coupled to heterotrimeric Gq proteins, it stimulates inositol trisphosphate production and calcium mobilization upon activation. Together with CCL5/RANTES, may play a role in neuron survival through activation of a downstream signaling pathway involving the PI3, Akt and MAP kinases. CCL5/RANTES may also regulate insulin secretion by pancreatic islet cells through activation of this receptor. The chain is Probable G-protein coupled receptor 75 (GPR75) from Homo sapiens (Human).